The primary structure comprises 111 residues: Large ribosomal subunit protein eL42 (111 aa).

Zn(2+)-binding residues include cysteine 12, cysteine 15, cysteine 72, and cysteine 77.

It belongs to the eukaryotic ribosomal protein eL42 family. In terms of assembly, component of the large ribosomal subunit.

It localises to the cytoplasm. Its function is as follows. Component of the large ribosomal subunit. The ribosome is a large ribonucleoprotein complex responsible for the synthesis of proteins in the cell. The sequence is that of Large ribosomal subunit protein eL42 (RPL36A) from Oryctolagus cuniculus (Rabbit).